The primary structure comprises 252 residues: 5'-nucleotidase SurE (252 aa).

A divalent metal cation contacts are provided by Asp-8, Asp-9, Ser-39, and Asn-91.

This sequence belongs to the SurE nucleotidase family. It depends on a divalent metal cation as a cofactor.

The protein resides in the cytoplasm. It carries out the reaction a ribonucleoside 5'-phosphate + H2O = a ribonucleoside + phosphate. In terms of biological role, nucleotidase that shows phosphatase activity on nucleoside 5'-monophosphates. The sequence is that of 5'-nucleotidase SurE from Legionella pneumophila (strain Corby).